A 306-amino-acid polypeptide reads, in one-letter code: D-alanine--D-alanine ligase (306 aa).

The ATP-grasp domain maps to Lys102–Glu300. Pro128–Thr183 lines the ATP pocket. 3 residues coordinate Mg(2+): Asp253, Glu267, and Asn269.

It belongs to the D-alanine--D-alanine ligase family. Mg(2+) serves as cofactor. It depends on Mn(2+) as a cofactor.

It is found in the cytoplasm. The catalysed reaction is 2 D-alanine + ATP = D-alanyl-D-alanine + ADP + phosphate + H(+). The protein operates within cell wall biogenesis; peptidoglycan biosynthesis. Its function is as follows. Cell wall formation. The chain is D-alanine--D-alanine ligase from Bartonella bacilliformis (strain ATCC 35685 / KC583 / Herrer 020/F12,63).